Here is a 444-residue protein sequence, read N- to C-terminus: N-succinylarginine dihydrolase (444 aa).

Substrate-binding positions include 19–28, N110, and 137–138; these read AGLSFGNVAS and HR. The active site involves E174. R214 provides a ligand contact to substrate. H250 is a catalytic residue. D252 and N362 together coordinate substrate. C368 (nucleophile) is an active-site residue.

This sequence belongs to the succinylarginine dihydrolase family. As to quaternary structure, homodimer.

The catalysed reaction is N(2)-succinyl-L-arginine + 2 H2O + 2 H(+) = N(2)-succinyl-L-ornithine + 2 NH4(+) + CO2. The protein operates within amino-acid degradation; L-arginine degradation via AST pathway; L-glutamate and succinate from L-arginine: step 2/5. In terms of biological role, catalyzes the hydrolysis of N(2)-succinylarginine into N(2)-succinylornithine, ammonia and CO(2). This Shewanella baltica (strain OS223) protein is N-succinylarginine dihydrolase.